A 403-amino-acid polypeptide reads, in one-letter code: Enoyl-[acyl-carrier-protein] reductase [NADH] (403 aa).

Residues 49 to 54 (GASSGY), 75 to 76 (FE), 112 to 113 (DA), and 141 to 142 (LA) each bind NAD(+). Residue tyrosine 227 participates in substrate binding. Tyrosine 237 (proton donor) is an active-site residue. Residues lysine 246 and 276-278 (VVT) each bind NAD(+).

Belongs to the TER reductase family. As to quaternary structure, monomer.

The enzyme catalyses a 2,3-saturated acyl-[ACP] + NAD(+) = a (2E)-enoyl-[ACP] + NADH + H(+). The protein operates within lipid metabolism; fatty acid biosynthesis. Functionally, involved in the final reduction of the elongation cycle of fatty acid synthesis (FAS II). Catalyzes the reduction of a carbon-carbon double bond in an enoyl moiety that is covalently linked to an acyl carrier protein (ACP). The polypeptide is Enoyl-[acyl-carrier-protein] reductase [NADH] (Pseudomonas putida (strain GB-1)).